A 979-amino-acid chain; its full sequence is UPF0182 protein Rv0064 (979 aa).

7 helical membrane passes run 19-41, 63-85, 114-136, 174-196, 208-230, 261-280, and 285-307; these read LVTA…DIYV, LAIV…LLAY, LFGW…FDWV, WLFV…FGGL, AARV…AYWL, LVLV…AIFL, and IPAM…WPLL. Residues 898–948 form a disordered region; the sequence is GTGRVATARGGDAASAPPPGAGGPAPPQAVPPPRTTQPPAAPPRGPDVPPA. Residues 913–946 are compositionally biased toward pro residues; the sequence is APPPGAGGPAPPQAVPPPRTTQPPAAPPRGPDVP.

The protein belongs to the UPF0182 family.

The protein resides in the cell membrane. In Mycobacterium tuberculosis (strain ATCC 25618 / H37Rv), this protein is UPF0182 protein Rv0064.